The primary structure comprises 359 residues: Small ribosomal subunit biogenesis GTPase RsgA (359 aa).

The region spanning 101–259 (KRKGSQAIAS…LMDNPGIREV (159 aa)) is the CP-type G domain. GTP is bound by residues 149-152 (NKKD) and 201-209 (GSSGAGKST). Residues Cys284, Cys289, His291, and Cys297 each contribute to the Zn(2+) site. A disordered region spans residues 331–359 (DPEEARKKKQKDKQMSKALQKRLKDKGRK). Residues 349–359 (LQKRLKDKGRK) are compositionally biased toward basic residues.

It belongs to the TRAFAC class YlqF/YawG GTPase family. RsgA subfamily. In terms of assembly, monomer. Associates with 30S ribosomal subunit, binds 16S rRNA. Requires Zn(2+) as cofactor.

Its subcellular location is the cytoplasm. Its function is as follows. One of several proteins that assist in the late maturation steps of the functional core of the 30S ribosomal subunit. Helps release RbfA from mature subunits. May play a role in the assembly of ribosomal proteins into the subunit. Circularly permuted GTPase that catalyzes slow GTP hydrolysis, GTPase activity is stimulated by the 30S ribosomal subunit. This Leptospira interrogans serogroup Icterohaemorrhagiae serovar copenhageni (strain Fiocruz L1-130) protein is Small ribosomal subunit biogenesis GTPase RsgA.